Reading from the N-terminus, the 819-residue chain is Lon protease (819 aa).

Positions 1-14 (MNSTNNTDSQNLDP) are enriched in polar residues. The tract at residues 1–41 (MNSTNNTDSQNLDPNASEVEKLLDESAEAEEKTDDHTPPSE) is disordered. The span at 18–38 (EVEKLLDESAEAEEKTDDHTP) shows a compositional bias: basic and acidic residues. Residues 42–239 (LFILPLNKRP…KALVLLKKEL (198 aa)) enclose the Lon N-terminal domain. Position 392–399 (392–399 (GPPGVGKT)) interacts with ATP. The region spanning 634-818 (KTPVGVATGL…DDVFKIAFPG (185 aa)) is the Lon proteolytic domain. Residues S724 and K767 contribute to the active site.

It belongs to the peptidase S16 family. Homohexamer. Organized in a ring with a central cavity.

The protein resides in the cytoplasm. It catalyses the reaction Hydrolysis of proteins in presence of ATP.. ATP-dependent serine protease that mediates the selective degradation of mutant and abnormal proteins as well as certain short-lived regulatory proteins. Required for cellular homeostasis and for survival from DNA damage and developmental changes induced by stress. Degrades polypeptides processively to yield small peptide fragments that are 5 to 10 amino acids long. Binds to DNA in a double-stranded, site-specific manner. This Chlamydia muridarum (strain MoPn / Nigg) protein is Lon protease.